The sequence spans 146 residues: Hemoglobin subunit beta (146 aa).

N-acetylvaline is present on V1. Positions H2–H146 constitute a Globin domain. T12 is modified (phosphothreonine). The residue at position 44 (S44) is a Phosphoserine. K59 carries the post-translational modification N6-acetyllysine. Residue H63 coordinates heme b. Position 82 is an N6-acetyllysine (K82). Position 92 (H92) interacts with heme b. C93 carries the S-nitrosocysteine modification. The residue at position 144 (K144) is an N6-acetyllysine.

It belongs to the globin family. In terms of assembly, heterotetramer of two alpha chains and two beta chains. As to expression, red blood cells.

Involved in oxygen transport from the lung to the various peripheral tissues. The protein is Hemoglobin subunit beta (HBB) of Saguinus mystax (Moustached tamarin).